The sequence spans 436 residues: Trigger factor (436 aa).

One can recognise a PPIase FKBP-type domain in the interval 163 to 248; that stretch reads GDRVVLDFAG…VKEVAEGVLP (86 aa).

It belongs to the FKBP-type PPIase family. Tig subfamily.

The protein resides in the cytoplasm. It carries out the reaction [protein]-peptidylproline (omega=180) = [protein]-peptidylproline (omega=0). In terms of biological role, involved in protein export. Acts as a chaperone by maintaining the newly synthesized protein in an open conformation. Functions as a peptidyl-prolyl cis-trans isomerase. The chain is Trigger factor from Bordetella bronchiseptica (strain ATCC BAA-588 / NCTC 13252 / RB50) (Alcaligenes bronchisepticus).